The following is a 393-amino-acid chain: Homogentisate phytyltransferase 1, chloroplastic (393 aa).

A chloroplast-targeting transit peptide spans 1–36; that stretch reads MESLLSSSSLVSAAGGFCWKKQNLKLHSLSEIRVLR. Helical transmembrane passes span 108–128, 133–153, 170–190, 205–227, 232–252, 271–291, 314–334, 338–358, and 371–391; these read TVIGTVLSILSVSFLAVEKVS, LLFTGILEAVVAALMMNIYIV, YLPLASGEYSVNTGIAIVASF, PLFWALFVSFMLGTAYSINLPLL, FALVAAMCILAVRAIIVQIAF, LIFATAFMSFFSVVIALFKDI, VFWTCVTLLQMAYAVAILVGA, FIWSKVISVVGHVILATTLWA, and ITSCYMFIWKLFYAEYLLLPF.

This sequence belongs to the UbiA prenyltransferase family.

It is found in the plastid. Its subcellular location is the chloroplast membrane. It catalyses the reaction phytyl diphosphate + homogentisate + H(+) = 2-methyl-6-phytyl-1,4-benzene-1,4-diol + CO2 + diphosphate. The protein operates within cofactor biosynthesis; tocopherol biosynthesis. Involved in the synthesis of tocopherol (vitamin E). Catalyzes the condensation of homogentisate and phytyl diphosphate to form dimethylphytylhydrquinone. Low activity with geranylgeranyl diphosphate as substrate, but no activity with farnesyl diphosphate or solanesyl diphosphate. Tocopherol functions to limit lipid oxidation during seed desiccation, quiescence and germination and early seedling development. Protects thylakoid membrane lipids from photooxidation and is required for low-temperature adaptation. The sequence is that of Homogentisate phytyltransferase 1, chloroplastic (HPT1) from Arabidopsis thaliana (Mouse-ear cress).